A 409-amino-acid polypeptide reads, in one-letter code: NADH-quinone oxidoreductase subunit D (409 aa).

It belongs to the complex I 49 kDa subunit family. In terms of assembly, NDH-1 is composed of 14 different subunits. Subunits NuoB, C, D, E, F, and G constitute the peripheral sector of the complex.

Its subcellular location is the cell inner membrane. The catalysed reaction is a quinone + NADH + 5 H(+)(in) = a quinol + NAD(+) + 4 H(+)(out). NDH-1 shuttles electrons from NADH, via FMN and iron-sulfur (Fe-S) centers, to quinones in the respiratory chain. The immediate electron acceptor for the enzyme in this species is believed to be ubiquinone. Couples the redox reaction to proton translocation (for every two electrons transferred, four hydrogen ions are translocated across the cytoplasmic membrane), and thus conserves the redox energy in a proton gradient. In Campylobacter curvus (strain 525.92), this protein is NADH-quinone oxidoreductase subunit D.